A 419-amino-acid polypeptide reads, in one-letter code: MDKFRVQGPTTLQGEVTISGAKNAALPILFAALLAEEPVEIQNVPKLKDVDTSMKLLSQLGAKVERNGSVHIDASQVNVFCAPYDLVKTMRASIWALGPLVARFGQGQVSLPGGCTIGARPVDLHITGLEQLGATIKLEEGYVKASVEGRLKGAHIVMDKVSVGATVTIMCAATLAEGTTIIENAAREPEIVDTANFLVTLGAKIAGQGTDRITIEGVERLGGGVYRVLPDRIETGTFLVAAAISRGKILCRNAQPDTLDAVLAKLRDAGADIEVGEDWISLDMHGKRPKAVNVRTAPHPAFPTDMQAQFTLLNLVAEGTGFITETVFENRFMHVPELSRMGARAEIESNTVICHGVETLSGAQVMATDLRASASLVLAGCIAEGTTIVDRIYHIDRGYERIEDKLRALGANIERVKGE.

A phosphoenolpyruvate-binding site is contributed by 22 to 23; the sequence is KN. A UDP-N-acetyl-alpha-D-glucosamine-binding site is contributed by arginine 91. Cysteine 115 serves as the catalytic Proton donor. Cysteine 115 bears the 2-(S-cysteinyl)pyruvic acid O-phosphothioketal mark. UDP-N-acetyl-alpha-D-glucosamine is bound by residues 120–124, 160–163, aspartate 305, and valine 327; these read RPVDL and KVSV.

This sequence belongs to the EPSP synthase family. MurA subfamily.

It is found in the cytoplasm. It carries out the reaction phosphoenolpyruvate + UDP-N-acetyl-alpha-D-glucosamine = UDP-N-acetyl-3-O-(1-carboxyvinyl)-alpha-D-glucosamine + phosphate. It functions in the pathway cell wall biogenesis; peptidoglycan biosynthesis. Cell wall formation. Adds enolpyruvyl to UDP-N-acetylglucosamine. The sequence is that of UDP-N-acetylglucosamine 1-carboxyvinyltransferase from Salmonella agona (strain SL483).